Here is a 104-residue protein sequence, read N- to C-terminus: MSAIQGIEGVISQLQATAMSARAQESLPQPTISFAGQLHAALDRISDTQTVARTQAEKFTLGEPGVALNDVMTDMQKASVSMQMGIQVRNKLVAAYQEVMSMQV.

Belongs to the FliE family.

The protein localises to the bacterial flagellum basal body. In Escherichia coli O6:K15:H31 (strain 536 / UPEC), this protein is Flagellar hook-basal body complex protein FliE.